The chain runs to 278 residues: Ubiquinone biosynthesis protein COQ4, mitochondrial (278 aa).

The transit peptide at 1–28 directs the protein to the mitochondrion; that stretch reads MATPTSVRIAGFRSLQALCAQRTVTRNF. Residues histidine 164, aspartate 165, histidine 168, and glutamate 180 each contribute to the Zn(2+) site.

This sequence belongs to the COQ4 family. In terms of assembly, component of a multi-subunit COQ enzyme complex, composed of at least COQ3, COQ4, COQ5, COQ6, COQ7 and COQ9. Zn(2+) is required as a cofactor.

The protein resides in the mitochondrion inner membrane. The enzyme catalyses a 4-hydroxy-3-methoxy-5-(all-trans-polyprenyl)benzoate + H(+) = a 2-methoxy-6-(all-trans-polyprenyl)phenol + CO2. It functions in the pathway cofactor biosynthesis; ubiquinone biosynthesis. In terms of biological role, lyase that catalyzes the C1-decarboxylation of 4-hydroxy-3-methoxy-5-(all-trans-polyprenyl)benzoic acid into 2-methoxy-6-(all-trans-polyprenyl)phenol during ubiquinone biosynthesis. The sequence is that of Ubiquinone biosynthesis protein COQ4, mitochondrial from Uncinocarpus reesii (strain UAMH 1704).